Here is a 272-residue protein sequence, read N- to C-terminus: Hematopoietically-expressed homeobox protein hhex (272 aa).

Positions R137–K196 form a DNA-binding region, homeobox. Residues C222–H272 are disordered. Acidic residues predominate over residues E250–I261.

As to expression, first expressed in the dorsal endomesoderm of the gastrula stage embryo. The dorsal endomesoderm contributes to forming the embryonic liver, and expression continues in the liver throughout development. Also expressed in precursors of the developing thyroid gland, and beginning at the tailbud stage, expressed in the ventral region of the head. Also transiently expressed in the endothelial layer of developing vascular tissues of the embryo, beginning at the tailbud stages.

The protein resides in the nucleus. Recognizes the DNA sequence 5'-ATTAA-3'. Transcriptional repressor. Regulates the differentiation of both endothelial and blood cells. Probably plays a role in the proliferation of vascular endothelial cells during blood vessel development. Establishes anterior identity at two levels; acts early to enhance canonical wnt-signaling by repressing expression of tle4, and acts later to inhibit nodal-signaling by directly targeting nodal/nr1 and nodal2/nr2. May play a role in liver development. Induces heart development. This chain is Hematopoietically-expressed homeobox protein hhex, found in Xenopus laevis (African clawed frog).